The sequence spans 85 residues: uncharacterized protein (85 aa).

This is an uncharacterized protein from Caenorhabditis elegans.